An 850-amino-acid polypeptide reads, in one-letter code: Envelope glycoprotein gp160 (850 aa).

The signal sequence occupies residues 1-28 (METQTSWLSLWRWGLMIFGMLMICSARE). At 29-678 (NLWVTVYYGV…ISNWLWYIKI (650 aa)) the chain is on the extracellular side. C50 and C70 are disulfide-bonded. N84, N126, N133, N134, N139, N152, N156, N184, N193, N226, N230, N237, N258, N272, N285, N297, N327, N334, and N349 each carry an N-linked (GlcNAc...) asparagine; by host glycan. Cystine bridges form between C115/C201, C122/C192, C127/C153, C214/C243, and C224/C235. A V1 region spans residues 127–152 (CSDVNSNNSTDSNSSASNNSPEIMKN). A V2 region spans residues 153–192 (CSFNVTTEIRNKRKQEYALFYRQDVVPINSDNKSYILINC). A V3 region spans residues 292–325 (CTRPNNNTRKGIHMGPGQVLYATGEIIGDIRKAY). C292 and C326 are oxidised to a cystine. The segment at 357–367 (PSGGDIEITTH) is CD4-binding loop. Disulfide bonds link C371/C436 and C378/C409. A V4 region spans residues 378 to 409 (CNTSTLFNSSWDENNIKDTNSTNDNTTITIPC). N-linked (GlcNAc...) asparagine; by host glycosylation is found at N379, N385, N397, N402, N433, N439, N453, and N457. The tract at residues 447 to 467 (RDGGNRNGSENGTETFRPTGG) is disordered. Over residues 453–462 (NGSENGTETF) the composition is skewed to polar residues. V5 stretches follow at residues 453–465 (NGSE…FRPT) and 454–465 (GSENGTETFRPT). Positions 506–526 (AVGIGAVFLGFLGTAGSTMGA) are fusion peptide. The interval 568-586 (KQLQARVLAVERYLKDQQL) is immunosuppression. A disulfide bridge links C592 with C598. Residues N605, N610, N619, N631, and N668 are each glycosylated (N-linked (GlcNAc...) asparagine; by host). The stretch at 627 to 661 (REINNYTGIIYSLIEEAQNQQETNEKDLLALDKWT) forms a coiled coil. The tract at residues 656 to 677 (ALDKWTNLWNWFNISNWLWYIK) is MPER; binding to GalCer. The helical transmembrane segment at 679–699 (FIMIIGGLIGLRIIFAVLAIV) threads the bilayer. At 700 to 850 (NRVRQGYSPL…IRQGLERALL (151 aa)) the chain is on the cytoplasmic side. A YXXL motif; contains endocytosis signal motif is present at residues 706-709 (YSPL). C758 is lipidated: S-palmitoyl cysteine; by host. Positions 849–850 (LL) match the Di-leucine internalization motif motif.

It belongs to the HIV-1 env protein family. As to quaternary structure, the mature envelope protein (Env) consists of a homotrimer of non-covalently associated gp120-gp41 heterodimers. The resulting complex protrudes from the virus surface as a spike. There seems to be as few as 10 spikes on the average virion. Interacts with host CD4, CCR5 and CXCR4. Gp120 also interacts with the C-type lectins CD209/DC-SIGN and CLEC4M/DC-SIGNR (collectively referred to as DC-SIGN(R)). Gp120 and gp41 interact with GalCer. Gp120 interacts with host ITGA4/ITGB7 complex; on CD4+ T-cells, this interaction results in rapid activation of integrin ITGAL/LFA-1, which facilitates efficient cell-to-cell spreading of HIV-1. Gp120 interacts with cell-associated heparan sulfate; this interaction increases virus infectivity on permissive cells and may be involved in infection of CD4- cells. In terms of assembly, the mature envelope protein (Env) consists of a homotrimer of non-covalently associated gp120-gp41 heterodimers. The resulting complex protrudes from the virus surface as a spike. There seems to be as few as 10 spikes on the average virion. Highly glycosylated by host. The high number of glycan on the protein is reffered to as 'glycan shield' because it contributes to hide protein sequence from adaptive immune system. In terms of processing, palmitoylation of the transmembrane protein and of Env polyprotein (prior to its proteolytic cleavage) is essential for their association with host cell membrane lipid rafts. Palmitoylation is therefore required for envelope trafficking to classical lipid rafts, but not for viral replication. Post-translationally, specific enzymatic cleavages in vivo yield mature proteins. Envelope glycoproteins are synthesized as an inactive precursor that is heavily N-glycosylated and processed likely by host cell furin in the Golgi to yield the mature SU and TM proteins. The cleavage site between SU and TM requires the minimal sequence [KR]-X-[KR]-R. About 2 of the 9 disulfide bonds of gp41 are reduced by P4HB/PDI, following binding to CD4 receptor.

It localises to the virion membrane. Its subcellular location is the host cell membrane. The protein localises to the host endosome membrane. Its function is as follows. Oligomerizes in the host endoplasmic reticulum into predominantly trimers. In a second time, gp160 transits in the host Golgi, where glycosylation is completed. The precursor is then proteolytically cleaved in the trans-Golgi and thereby activated by cellular furin or furin-like proteases to produce gp120 and gp41. In terms of biological role, attaches the virus to the host lymphoid cell by binding to the primary receptor CD4. This interaction induces a structural rearrangement creating a high affinity binding site for a chemokine coreceptor like CXCR4 and/or CCR5. Acts as a ligand for CD209/DC-SIGN and CLEC4M/DC-SIGNR, which are respectively found on dendritic cells (DCs), and on endothelial cells of liver sinusoids and lymph node sinuses. These interactions allow capture of viral particles at mucosal surfaces by these cells and subsequent transmission to permissive cells. HIV subverts the migration properties of dendritic cells to gain access to CD4+ T-cells in lymph nodes. Virus transmission to permissive T-cells occurs either in trans (without DCs infection, through viral capture and transmission), or in cis (following DCs productive infection, through the usual CD4-gp120 interaction), thereby inducing a robust infection. In trans infection, bound virions remain infectious over days and it is proposed that they are not degraded, but protected in non-lysosomal acidic organelles within the DCs close to the cell membrane thus contributing to the viral infectious potential during DCs' migration from the periphery to the lymphoid tissues. On arrival at lymphoid tissues, intact virions recycle back to DCs' cell surface allowing virus transmission to CD4+ T-cells. Acts as a class I viral fusion protein. Under the current model, the protein has at least 3 conformational states: pre-fusion native state, pre-hairpin intermediate state, and post-fusion hairpin state. During fusion of viral and target intracellular membranes, the coiled coil regions (heptad repeats) assume a trimer-of-hairpins structure, positioning the fusion peptide in close proximity to the C-terminal region of the ectodomain. The formation of this structure appears to drive apposition and subsequent fusion of viral and target cell membranes. Complete fusion occurs in host cell endosomes and is dynamin-dependent, however some lipid transfer might occur at the plasma membrane. The virus undergoes clathrin-dependent internalization long before endosomal fusion, thus minimizing the surface exposure of conserved viral epitopes during fusion and reducing the efficacy of inhibitors targeting these epitopes. Membranes fusion leads to delivery of the nucleocapsid into the cytoplasm. This chain is Envelope glycoprotein gp160, found in Human immunodeficiency virus type 1 group M subtype J (isolate SE9173) (HIV-1).